We begin with the raw amino-acid sequence, 917 residues long: Intercellular adhesion molecule 5 (917 aa).

The first 31 residues, 1-31 (MPGPSPGLRRALLGLWAALGLGILGISAVAL), serve as a signal peptide directing secretion. Residues 32–833 (EPFWADLQPR…RITVRVAGPW (802 aa)) are Extracellular-facing. 9 consecutive Ig-like C2-type domains span residues 48–130 (GGSL…PLPS), 135–235 (GENF…SLIA), 242–329 (DSER…LLTL), 337–402 (GKMV…SSEL), 408–486 (PRLD…VTLT), 491–567 (PALD…VAVT), 572–651 (PSFE…NRHG), 665–738 (PQMD…RTVT), and 745–828 (PVVA…ITVR). N54 carries an N-linked (GlcNAc...) (high mannose) asparagine glycan. Cystine bridges form between C55-C99 and C59-C103. N-linked (GlcNAc...) asparagine glycans are attached at residues N74 and N137. The cysteines at positions 142 and 198 are disulfide-linked. T182 carries the post-translational modification Phosphothreonine. 6 N-linked (GlcNAc...) asparagine glycosylation sites follow: N195, N214, N274, N316, N371, and N397. A disulfide bond links C249 and C302. A disulfide bond links C344 and C383. Intrachain disulfides connect C415–C470, C498–C551, and C579–C644. Residues N582 and N645 are each glycosylated (N-linked (GlcNAc...) asparagine). The cysteines at positions 672 and 724 are disulfide-linked. N-linked (GlcNAc...) asparagine glycosylation is found at N762, N793, and N794. Residues C767 and C812 are joined by a disulfide bond. The chain crosses the membrane as a helical span at residues 834-854 (LWVAVGGAAGGAALLAAGAGL). Residues 855–917 (AFYVQSTACK…EVFAIQLTSS (63 aa)) are Cytoplasmic-facing. The segment covering 884 to 893 (GAGGTPGAEG) has biased composition (gly residues). Positions 884-908 (GAGGTPGAEGGAETPGTAESPADGE) are disordered.

The protein belongs to the immunoglobulin superfamily. ICAM family. In terms of processing, glycosylation at Asn-54 is critical for functional folding. In terms of tissue distribution, expressed on neurons in the most rostral segment of the mammalian brain, the telencephalon.

The protein resides in the membrane. Its function is as follows. ICAM proteins are ligands for the leukocyte adhesion protein LFA-1 (integrin alpha-L/beta-2). This is Intercellular adhesion molecule 5 (Icam5) from Mus musculus (Mouse).